The following is a 217-amino-acid chain: Protein GrpE (217 aa).

Acidic residues-rich tracts occupy residues 1–28 (MSDD…EGDD), 136–152 (DILD…DPGT), and 204–217 (SEAE…DGDE). 3 disordered regions span residues 1 to 44 (MSDD…NDPA), 135 to 157 (DDIL…TDPK), and 193 to 217 (QVTV…DGDE).

Belongs to the GrpE family. In terms of assembly, homodimer.

Its subcellular location is the cytoplasm. Its function is as follows. Participates actively in the response to hyperosmotic and heat shock by preventing the aggregation of stress-denatured proteins, in association with DnaK and GrpE. It is the nucleotide exchange factor for DnaK and may function as a thermosensor. Unfolded proteins bind initially to DnaJ; upon interaction with the DnaJ-bound protein, DnaK hydrolyzes its bound ATP, resulting in the formation of a stable complex. GrpE releases ADP from DnaK; ATP binding to DnaK triggers the release of the substrate protein, thus completing the reaction cycle. Several rounds of ATP-dependent interactions between DnaJ, DnaK and GrpE are required for fully efficient folding. The polypeptide is Protein GrpE (Natronomonas pharaonis (strain ATCC 35678 / DSM 2160 / CIP 103997 / JCM 8858 / NBRC 14720 / NCIMB 2260 / Gabara) (Halobacterium pharaonis)).